The chain runs to 386 residues: Succinate--CoA ligase [ADP-forming] subunit beta (386 aa).

Positions 9 to 244 (KDLLTSYAIP…PSQENVRDVL (236 aa)) constitute an ATP-grasp domain. Residues Lys46, 53–55 (GRG), Val102, and Glu107 each bind ATP. Residues Asn199 and Asp213 each contribute to the Mg(2+) site. Substrate is bound by residues Asn264 and 321–323 (GIM).

This sequence belongs to the succinate/malate CoA ligase beta subunit family. In terms of assembly, heterotetramer of two alpha and two beta subunits. Mg(2+) serves as cofactor.

It carries out the reaction succinate + ATP + CoA = succinyl-CoA + ADP + phosphate. The catalysed reaction is GTP + succinate + CoA = succinyl-CoA + GDP + phosphate. It functions in the pathway carbohydrate metabolism; tricarboxylic acid cycle; succinate from succinyl-CoA (ligase route): step 1/1. In terms of biological role, succinyl-CoA synthetase functions in the citric acid cycle (TCA), coupling the hydrolysis of succinyl-CoA to the synthesis of either ATP or GTP and thus represents the only step of substrate-level phosphorylation in the TCA. The beta subunit provides nucleotide specificity of the enzyme and binds the substrate succinate, while the binding sites for coenzyme A and phosphate are found in the alpha subunit. The sequence is that of Succinate--CoA ligase [ADP-forming] subunit beta from Chlamydia abortus (strain DSM 27085 / S26/3) (Chlamydophila abortus).